The following is a 113-amino-acid chain: Putative anti-sigma factor antagonist TM_1081 (113 aa).

In terms of domain architecture, STAS spans 1–110; the sequence is MFPYKIVDDV…DTISEAMEEV (110 aa). S55 is subject to Phosphoserine.

It belongs to the anti-sigma-factor antagonist family. In terms of processing, phosphorylated on a serine residue.

In the phosphorylated form it could act as an anti-anti-sigma factor that counteracts an anti-sigma factor and thus releases a sigma factor from inhibition. The sequence is that of Putative anti-sigma factor antagonist TM_1081 from Thermotoga maritima (strain ATCC 43589 / DSM 3109 / JCM 10099 / NBRC 100826 / MSB8).